A 198-amino-acid chain; its full sequence is Probable minor pilin MMP0709 (198 aa).

Positions 1–5 are excised as a propeptide; it reads MSNRG. Residues 6–14 carry the QXSXEXXXL motif; it reads QLSIEMVIL.

In terms of processing, the N-terminus is probably cleaved by the prepilin peptidase EppA, which recognizes the class III signal sequence.

It localises to the secreted. It is found in the cell surface. The protein localises to the fimbrium. The chain is Probable minor pilin MMP0709 from Methanococcus maripaludis (strain DSM 14266 / JCM 13030 / NBRC 101832 / S2 / LL).